The following is a 263-amino-acid chain: Type III pantothenate kinase (263 aa).

6-13 (DVGNTRIK) lines the ATP pocket. Substrate-binding positions include Tyr92 and 99 to 102 (GTDR). Asp101 functions as the Proton acceptor in the catalytic mechanism. Thr124 serves as a coordination point for ATP. Thr174 contributes to the substrate binding site.

The protein belongs to the type III pantothenate kinase family. As to quaternary structure, homodimer. NH4(+) serves as cofactor. Requires K(+) as cofactor.

The protein localises to the cytoplasm. It catalyses the reaction (R)-pantothenate + ATP = (R)-4'-phosphopantothenate + ADP + H(+). Its pathway is cofactor biosynthesis; coenzyme A biosynthesis; CoA from (R)-pantothenate: step 1/5. Catalyzes the phosphorylation of pantothenate (Pan), the first step in CoA biosynthesis. The chain is Type III pantothenate kinase from Azoarcus sp. (strain BH72).